We begin with the raw amino-acid sequence, 209 residues long: Large ribosomal subunit protein uL3 (209 aa).

The disordered stretch occupies residues 119–145; the sequence is AIKRHGQSRGPMSHGSHFHRAPGSVGM.

This sequence belongs to the universal ribosomal protein uL3 family. As to quaternary structure, part of the 50S ribosomal subunit. Forms a cluster with proteins L14 and L19.

Its function is as follows. One of the primary rRNA binding proteins, it binds directly near the 3'-end of the 23S rRNA, where it nucleates assembly of the 50S subunit. This Staphylococcus aureus (strain COL) protein is Large ribosomal subunit protein uL3.